The primary structure comprises 587 residues: Phosphatidylinositol-3-phosphatase SAC1 (587 aa).

Topologically, residues 1–520 are cytoplasmic; the sequence is MAATTYERLK…SPLSVPRDLK (520 aa). An SAC domain is found at 122-451; sequence MNHVLSMDGF…ANACAKQYAG (330 aa). An essential for phosphatidylinositol-4-phosphate phosphatase activity region spans residues 452–587; that stretch reads TGALKTDFTR…PRLVQKEKID (136 aa). Lys456 bears the N6-acetyllysine mark. The helical transmembrane segment at 521–541 threads the bilayer; it reads FLALPIIMVVAFSMCIICLLM. At 542-548 the chain is on the lumenal side; sequence AGDTWTE. The helical transmembrane segment at 549–569 threads the bilayer; sequence TLAYVLFWGVASIGTFFIILY. The Cytoplasmic portion of the chain corresponds to 570-587; that stretch reads NGKDFVDAPRLVQKEKID.

As to quaternary structure, interacts with TMEM39A. Interacts with SEC23A and SEC24A; this interaction is reduced in the absence of TMEM39A. Interacts with PLEKHA3 and VAPA and/or VAPB to form a ternary complex.

Its subcellular location is the endoplasmic reticulum membrane. It is found in the golgi apparatus membrane. It catalyses the reaction a 1,2-diacyl-sn-glycero-3-phospho-(1D-myo-inositol-3-phosphate) + H2O = a 1,2-diacyl-sn-glycero-3-phospho-(1D-myo-inositol) + phosphate. The enzyme catalyses a 1,2-diacyl-sn-glycero-3-phospho-(1D-myo-inositol 4-phosphate) + H2O = a 1,2-diacyl-sn-glycero-3-phospho-(1D-myo-inositol) + phosphate. Functionally, phosphoinositide phosphatase which catalyzes the hydrolysis of phosphatidylinositol 4-phosphate (PtdIns(4)P), phosphatidylinositol 3-phosphate (PtdIns(3)P) and has low activity towards phosphatidylinositol-3,5-bisphosphate (PtdIns(3,5)P2). Shows a very robust PtdIns(4)P phosphatase activity when it binds PtdIns(4)P in a 'cis' configuration in the cellular environment, with much less activity seen when it binds PtdIns(4)P in 'trans' configuration. PtdIns(4)P phosphatase activity (when it binds PtdIns(4)P in 'trans' configuration) is enhanced in the presence of PLEKHA3. The polypeptide is Phosphatidylinositol-3-phosphatase SAC1 (SACM1L) (Bos taurus (Bovine)).